The primary structure comprises 101 residues: MDKSKRPFLKSKRSFRRRLPPIQSGDRIDYRNMSLISRFISEQGKILSRRVNRLTLKQQRLITIAIKQARILSLLPFLNNDKQFERTESTARTAGLRARKK.

Belongs to the bacterial ribosomal protein bS18 family. Part of the 30S ribosomal subunit.

The protein resides in the plastid. Its subcellular location is the chloroplast. The sequence is that of Small ribosomal subunit protein bS18c from Panax ginseng (Korean ginseng).